The chain runs to 751 residues: Photosystem I P700 chlorophyll a apoprotein A1 (751 aa).

8 helical membrane passes run 71–94 (VFSAHFGQLSIIFLWLSGMYFHGA), 157–180 (LYCTAIGALIFASLMLFAGWFHYH), 196–220 (LNHHLAGLLGLGSLSWAGHQIHVSL), 292–310 (IAHHHLAIAILFLIAGHMY), 347–370 (WHAQLSLNLAMLGSTTIVVAHHMY), 386–412 (LSLFTHHMWIGGFLIVGAAAHAAIFMV), 434–456 (AIISHLNWVCIFLGFHSFGLYIH), and 532–550 (FLVHHIHAFTIHVTVLILL). Residues Cys-574 and Cys-583 each coordinate [4Fe-4S] cluster. The next 2 helical transmembrane spans lie at 590–611 (HVFLGLFWMYNSISVVIFHFSW) and 665–687 (LSAYGLFFLGAHFVWAFSLMFLF). Position 676 (His-676) interacts with chlorophyll a'. The chlorophyll a site is built by Met-684 and Tyr-692. Trp-693 serves as a coordination point for phylloquinone. A helical transmembrane segment spans residues 725 to 745 (AVGVTHYLLGGIATTWAFFLA).

This sequence belongs to the PsaA/PsaB family. The PsaA/B heterodimer binds the P700 chlorophyll special pair and subsequent electron acceptors. PSI consists of a core antenna complex that captures photons, and an electron transfer chain that converts photonic excitation into a charge separation. The eukaryotic PSI reaction center is composed of at least 11 subunits. P700 is a chlorophyll a/chlorophyll a' dimer, A0 is one or more chlorophyll a, A1 is one or both phylloquinones and FX is a shared 4Fe-4S iron-sulfur center. serves as cofactor.

It is found in the plastid. The protein resides in the chloroplast thylakoid membrane. The enzyme catalyses reduced [plastocyanin] + hnu + oxidized [2Fe-2S]-[ferredoxin] = oxidized [plastocyanin] + reduced [2Fe-2S]-[ferredoxin]. In terms of biological role, psaA and PsaB bind P700, the primary electron donor of photosystem I (PSI), as well as the electron acceptors A0, A1 and FX. PSI is a plastocyanin-ferredoxin oxidoreductase, converting photonic excitation into a charge separation, which transfers an electron from the donor P700 chlorophyll pair to the spectroscopically characterized acceptors A0, A1, FX, FA and FB in turn. Oxidized P700 is reduced on the lumenal side of the thylakoid membrane by plastocyanin. The polypeptide is Photosystem I P700 chlorophyll a apoprotein A1 (Zea mays (Maize)).